A 705-amino-acid polypeptide reads, in one-letter code: Polyribonucleotide nucleotidyltransferase (705 aa).

Mg(2+) is bound by residues D486 and D492. One can recognise a KH domain in the interval 553–612 (PQFHTMKVDPEKIRDIIGKGGATIRSITEETGASIDIDDDGTVKIYGDDGDSLQGAINRI). One can recognise an S1 motif domain in the interval 622–690 (GEVYKGKVVR…QRGRIKLSIK (69 aa)).

It belongs to the polyribonucleotide nucleotidyltransferase family. As to quaternary structure, component of the RNA degradosome, which is a multiprotein complex involved in RNA processing and mRNA degradation. Mg(2+) is required as a cofactor.

Its subcellular location is the cytoplasm. It carries out the reaction RNA(n+1) + phosphate = RNA(n) + a ribonucleoside 5'-diphosphate. Involved in mRNA degradation. Catalyzes the phosphorolysis of single-stranded polyribonucleotides processively in the 3'- to 5'-direction. The polypeptide is Polyribonucleotide nucleotidyltransferase (Teredinibacter turnerae (strain ATCC 39867 / T7901)).